Reading from the N-terminus, the 166-residue chain is Early E3 18.5 kDa glycoprotein (166 aa).

The signal sequence occupies residues 1–19; that stretch reads MGPILVLLVLLSLLEPGSA. Residues 20-131 lie on the Lumenal side of the membrane; sequence NYDPCLDFDP…SKDNIVTFSI (112 aa). Residue Asn31 is glycosylated (N-linked (GlcNAc...) asparagine; by host). 2 disulfide bridges follow: Cys32–Cys50 and Cys44–Cys106. Asn63, Asn67, and Asn97 each carry an N-linked (GlcNAc...) asparagine; by host glycan. The chain crosses the membrane as a helical span at residues 132–152; the sequence is AYCLCACLLTALLCVCIHLLV. Residues 153-166 are Cytoplasmic-facing; sequence TTRIKNANNKEKMP. A Di-lysine motif motif is present at residues 162-166; the sequence is KEKMP.

It belongs to the adenoviridae E19 family. Both disulfide bonds are absolutely critical for the interaction with MHC antigens. Post-translationally, N-glycosylated; high-mannose.

The protein localises to the host endoplasmic reticulum membrane. Its function is as follows. Binds and retains class I heavy chains in the endoplasmic reticulum during the early period of virus infection, thereby impairing their transport to the cell surface. Also delays the expression of class I alleles that it cannot affect by direct retention. Binds transporters associated with antigen processing (TAP) and acts as a tapasin inhibitor, preventing class I/TAP association. In consequence, infected cells are masked for immune recognition by cytotoxic T-lymphocytes. This Human adenovirus B serotype 11 (strain Slobiski) (HAdV-11) protein is Early E3 18.5 kDa glycoprotein.